Here is an 88-residue protein sequence, read N- to C-terminus: UPF0250 protein Ssed_3490 (88 aa).

Belongs to the UPF0250 family.

The polypeptide is UPF0250 protein Ssed_3490 (Shewanella sediminis (strain HAW-EB3)).